The sequence spans 250 residues: Triosephosphate isomerase (250 aa).

9–11 (NWK) provides a ligand contact to substrate. The active-site Electrophile is the His-95. The Proton acceptor role is filled by Glu-167. Substrate contacts are provided by residues Gly-173, Ser-213, and 234 to 235 (GG).

The protein belongs to the triosephosphate isomerase family. As to quaternary structure, homodimer.

The protein resides in the cytoplasm. It catalyses the reaction D-glyceraldehyde 3-phosphate = dihydroxyacetone phosphate. It participates in carbohydrate biosynthesis; gluconeogenesis. It functions in the pathway carbohydrate degradation; glycolysis; D-glyceraldehyde 3-phosphate from glycerone phosphate: step 1/1. Involved in the gluconeogenesis. Catalyzes stereospecifically the conversion of dihydroxyacetone phosphate (DHAP) to D-glyceraldehyde-3-phosphate (G3P). This is Triosephosphate isomerase from Herpetosiphon aurantiacus (strain ATCC 23779 / DSM 785 / 114-95).